The following is a 1394-amino-acid chain: DNA-directed RNA polymerase subunit beta' (1394 aa).

Residues C70, C72, C85, and C88 each coordinate Zn(2+). Residues D470, D472, and D474 each coordinate Mg(2+). Zn(2+)-binding residues include C815, C889, C896, and C899.

The protein belongs to the RNA polymerase beta' chain family. As to quaternary structure, the RNAP catalytic core consists of 2 alpha, 1 beta, 1 beta' and 1 omega subunit. When a sigma factor is associated with the core the holoenzyme is formed, which can initiate transcription. The cofactor is Mg(2+). Zn(2+) serves as cofactor.

It catalyses the reaction RNA(n) + a ribonucleoside 5'-triphosphate = RNA(n+1) + diphosphate. DNA-dependent RNA polymerase catalyzes the transcription of DNA into RNA using the four ribonucleoside triphosphates as substrates. This Anaeromyxobacter sp. (strain K) protein is DNA-directed RNA polymerase subunit beta'.